A 461-amino-acid polypeptide reads, in one-letter code: Lysosomal proton-coupled steroid conjugate and bile acid symporter SLC46A3 (461 aa).

The N-terminal stretch at 1–25 (MKIPFVEPVICLSVFAVTLNSPLTT) is a signal peptide. The Extracellular portion of the chain corresponds to 26 to 70 (QYVYRRIWEETGNYSIALESNTSECAKNKSSPIFAFQEEVQKKVS). N-linked (GlcNAc...) asparagine glycosylation is found at N38, N46, and N53. A helical transmembrane segment spans residues 71–91 (LFNLEMDISGLIPGLVSTFVF). Residues 92 to 101 (LSHSDHGGRK) lie on the Cytoplasmic side of the membrane. Residues 102-124 (FPLILSSVGALANSAWLCLLSYF) traverse the membrane as a helical segment. The Extracellular portion of the chain corresponds to 125-133 (ALPIQLLIA). A helical membrane pass occupies residues 134–156 (STFIGALFGNYTTFLGASFAYIV). The Cytoplasmic portion of the chain corresponds to 157-170 (DQCKEKKQRTIRIA). Residues 171 to 191 (IIDFLFGVVSGLTGLSSGYFI) form a helical membrane-spanning segment. Over 192–195 (RGLG) the chain is Extracellular. A helical membrane pass occupies residues 196-216 (FVWSFLIVTVALFVNLIYILL). Topologically, residues 217–261 (FLEDSMKESSSQNISVSWTETFKNLFHRTYMLFKNASGEQQSLCC) are cytoplasmic. Residues 262–282 (LLLFTMITYFFVTIGVSPIFV) form a helical membrane-spanning segment. Residues 283–294 (LYELDSPLCWDE) lie on the Extracellular side of the membrane. A helical membrane pass occupies residues 295–315 (VLIGYGSALGSVTFFSSFLGI). Topologically, residues 316 to 324 (WLFSYCMED) are cytoplasmic. A helical transmembrane segment spans residues 325 to 345 (IHMAFIGTFTTMVGMAMTAFA). Over 346–347 (RT) the chain is Extracellular. Residues 348–368 (TLMMFLVRLPFLFTVMPLSVL) form a helical membrane-spanning segment. At 369–382 (RSMISKVVHSTEQG) the chain is on the cytoplasmic side. A helical membrane pass occupies residues 383–403 (TMFACLAFLETLGGITAVSTF). Residues 404-415 (NGIYSATVAWCK) are Extracellular-facing. The helical transmembrane segment at 416-436 (GFVFLLSAVLLLIPAISLCVI) threads the bilayer. Over 437–461 (KYVSRNTGSYVLLIQEESSEDTSDR) the chain is Cytoplasmic. Residues 446–449 (YVLL) carry the Tyrosine-based lysosomal-sorting motif motif.

This sequence belongs to the major facilitator superfamily. SLC46A family.

Its subcellular location is the lysosome membrane. It catalyses the reaction estrone 3-sulfate(out) + n H(+)(out) = estrone 3-sulfate(in) + n H(+)(in). The enzyme catalyses 25-hydroxyvitamin D3 sulfate(out) + n H(+)(out) = 25-hydroxyvitamin D3 sulfate(in) + n H(+)(in). It carries out the reaction cholate(out) + n H(+)(out) = cholate(in) + n H(+)(in). The catalysed reaction is glycocholate(out) + n H(+)(out) = glycocholate(in) + n H(+)(in). It catalyses the reaction taurocholate(out) + n H(+)(out) = taurocholate(in) + n H(+)(in). The enzyme catalyses dehydroepiandrosterone 3-sulfate(out) + n H(+)(out) = dehydroepiandrosterone 3-sulfate(in) + n H(+)(in). It carries out the reaction N-acetyl-D-muramoyl-L-alanyl-D-isoglutamine(out) + n H(+)(out) = N-acetyl-D-muramoyl-L-alanyl-D-isoglutamine(in) + n H(+)(in). The catalysed reaction is 2',3'-cGAMP(out) + n H(+)(out) = 2',3'-cGAMP(in) + n H(+)(in). Lysosomal proton-coupled steroid conjugate and bile acid transporter. Preferentially recognizes lipophilic steroid conjugates or bile acis as endogenous substrates and seems to mediate escape from lysosomes to the cytoplasm. Modulates hepatic cytosolic copper homeostasis, maybe acting as a lysosomal copper transporter and sequestering copper ions in the lysosome. Delivers pathogen-associated molecular patterns to cytosolic pattern recognition receptors as part of the innate immune response to microbes. Selectively transports bacterial muramyl dipeptide (MDP) into the cytosol for recognition by NOD2, triggering inflammatory responses. Likely acts as a redundant importer of cyclic GMP-AMP dinucleotides (cGAMPs) in monocyte and macrophage cell lineages. The transport mechanism, its electrogenicity and stoichiometry remain to be elucidated. The chain is Lysosomal proton-coupled steroid conjugate and bile acid symporter SLC46A3 (SLC46A3) from Bos taurus (Bovine).